The primary structure comprises 116 residues: HTH-type transcriptional regulator SarV (116 aa).

Residues 51 to 74 (RDTLHFEMLWDTSKIDVIIRKIYK) constitute a DNA-binding region (H-T-H motif).

Belongs to the SarA family.

It is found in the cytoplasm. Functionally, part of the pathway by which MgrA and SarA control autolysis. The chain is HTH-type transcriptional regulator SarV (sarV) from Staphylococcus aureus (strain Mu50 / ATCC 700699).